Here is a 128-residue protein sequence, read N- to C-terminus: Cytochrome c-type biogenesis protein CcmE (128 aa).

Topologically, residues Met1–Arg8 are cytoplasmic. Residues Leu9–Asn29 traverse the membrane as a helical; Signal-anchor for type II membrane protein segment. The Periplasmic segment spans residues Leu30–Ser128. Positions 120 and 124 each coordinate heme.

It belongs to the CcmE/CycJ family.

The protein localises to the cell inner membrane. Heme chaperone required for the biogenesis of c-type cytochromes. Transiently binds heme delivered by CcmC and transfers the heme to apo-cytochromes in a process facilitated by CcmF and CcmH. This is Cytochrome c-type biogenesis protein CcmE from Rickettsia typhi (strain ATCC VR-144 / Wilmington).